Consider the following 378-residue polypeptide: Sperm microtubule associated protein 2 (378 aa).

Disordered stretches follow at residues 1–35 (MGELGEHRSRSSLLSIPVLDTKTSGGSEYRESDGS) and 47–79 (WLQSSQATTERNTDDPEEEIPPEEMVGEELPEV). Over residues 47-56 (WLQSSQATTE) the composition is skewed to polar residues. Residues 61-77 (DPEEEIPPEEMVGEELP) are compositionally biased toward acidic residues. 7 THEG repeats span residues 113-132 (AKCRKKKNHRLLELAKPKFN), 179-198 (TITVPEVSRRVEELSRPKRF), 217-236 (STLEYQASNRLKRLATPKIR), 253-272 (AAQMAVPTPRTLRLAKPRAP), 285-304 (PKPYVSDYNRLLQLATPKAL), 321-340 (VTKNAVASSRIISLAQPKIR), and 355-374 (ASLVAQASPRIYELAVPKHI). Ser290 carries the post-translational modification Phosphoserine.

Interacts with CCT5.

Its subcellular location is the nucleus. Its function is as follows. May be involved (but not essential) in spermatogenesis. This chain is Sperm microtubule associated protein 2, found in Rattus norvegicus (Rat).